Reading from the N-terminus, the 190-residue chain is Holliday junction branch migration complex subunit RuvA (190 aa).

The interval 1 to 64 (MIGRISGQLA…EDAQILYGFG (64 aa)) is domain I. Residues 65–137 (SATERAAFRQ…LKGKLGADIG (73 aa)) are domain II. The interval 137–141 (GVQVS) is flexible linker. The tract at residues 142–190 (VSSDSQSDILQALVALGYSDRDAALALKALPKDIGVSDGIKLALKALAK) is domain III.

This sequence belongs to the RuvA family. Homotetramer. Forms an RuvA(8)-RuvB(12)-Holliday junction (HJ) complex. HJ DNA is sandwiched between 2 RuvA tetramers; dsDNA enters through RuvA and exits via RuvB. An RuvB hexamer assembles on each DNA strand where it exits the tetramer. Each RuvB hexamer is contacted by two RuvA subunits (via domain III) on 2 adjacent RuvB subunits; this complex drives branch migration. In the full resolvosome a probable DNA-RuvA(4)-RuvB(12)-RuvC(2) complex forms which resolves the HJ.

Its subcellular location is the cytoplasm. The RuvA-RuvB-RuvC complex processes Holliday junction (HJ) DNA during genetic recombination and DNA repair, while the RuvA-RuvB complex plays an important role in the rescue of blocked DNA replication forks via replication fork reversal (RFR). RuvA specifically binds to HJ cruciform DNA, conferring on it an open structure. The RuvB hexamer acts as an ATP-dependent pump, pulling dsDNA into and through the RuvAB complex. HJ branch migration allows RuvC to scan DNA until it finds its consensus sequence, where it cleaves and resolves the cruciform DNA. The chain is Holliday junction branch migration complex subunit RuvA from Polaromonas sp. (strain JS666 / ATCC BAA-500).